Consider the following 667-residue polypeptide: MEDGDEVVEPIEPESEDIVNLTKRLGVDLVLESNDDWKIQEIGFDGVERYLQPETFTDHVGKLARKVEWTKLVGTKSPYENSKVDPEDELDDENVAKGGLNEELVTPEAGPWSSVAKYLHESLNQLNSLLDVISVTKSTDYMKALTVLDPITVQEPTPETISTNRGTQWIWKRRALQEAVQVLDMAQKQRQRASSNLGLSADYMAHLQRTKFFEELREMREIWRVRKVGDYICGDLSYHIFGWKYDTPAIFDISRRSLSNNMENLSIIEVSVPKDLARRSMLAVSIVQDDIQSGNGLFRDPKDKKYTYSYRESDSEKVKLLHWKDSLKWAQNTLLLRDVFKTICTDAIKLRNRLSIIRDNVLLIHLFDDYLLRFELQWFPFQTGEIKEEGDIYLNRVLREMIIGFECTKFIRPQFFCSMPVTHLPEALDLRGCGGFNTAQIEERAVRSRSILQRMLDVASHRALVTMVSDVAERVSRISLDPTVQYRWLNCGRTTSRMMFNMTSKDFEMYIGTISSVRSVFFANISSDGVEVETKDGIKMKCQRDPARVMYACQYAMCCYSVTMVSTMSRNNNWVTPFQTMCANVFALDERGNPAPNIVLCNQAATRSILFVFHVGMEPEVFVRRFIVNEETMKPEEHEWKKLCYSRLHGATLCRKIDALLVFLRDH.

The stretch at 172–197 forms a coiled coil; sequence KRRALQEAVQVLDMAQKQRQRASSNL.

It belongs to the Mediator complex subunit 17 family. As to quaternary structure, component of the Mediator complex.

It is found in the nucleus. Component of the Mediator complex, a coactivator involved in regulated gene transcription of nearly all RNA polymerase II-dependent genes. Mediator functions as a bridge to convey information from gene-specific regulatory proteins to the basal RNA polymerase II transcription machinery. Mediator is recruited to promoters by direct interactions with regulatory proteins and serves as a scaffold for the assembly of a functional preinitiation complex with RNA polymerase II and the general transcription factors. The protein is Mediator of RNA polymerase II transcription subunit 17 (mdt-17) of Caenorhabditis elegans.